The chain runs to 259 residues: MNLLEKTRQLNTMLQQEASAHVDFKEMADKMREVLESNTFIVSRRGRLLGFAIKQQIENDRMKAFLVDRQFPEPYASNLFNVKETTANIDIDSEYTAFPVENHDLFLNSKTTIVPIIGGGERLGTLVLGRLANEFTEDDLVLAEYSATVVGMEILREKAAEAETSARKKAVVQMAINSLSYSELEAIEHIFEELGGNEGLLVASKIADRVGITRSVIVNALRKLESAGVIESRSLGMKGTYIKILNDNFLFELQKLKSN.

Residues 1–155 (MNLLEKTRQL…SATVVGMEIL (155 aa)) form a GAF domain region. Residues 203 to 222 (ASKIADRVGITRSVIVNALR) constitute a DNA-binding region (H-T-H motif).

This sequence belongs to the CodY family.

Its subcellular location is the cytoplasm. Functionally, DNA-binding global transcriptional regulator which is involved in the adaptive response to starvation and acts by directly or indirectly controlling the expression of numerous genes in response to nutrient availability. During rapid exponential growth, CodY is highly active and represses genes whose products allow adaptation to nutrient depletion. This is Global transcriptional regulator CodY from Exiguobacterium sp. (strain ATCC BAA-1283 / AT1b).